Reading from the N-terminus, the 337-residue chain is RNA 3'-terminal phosphate cyclase (337 aa).

ATP is bound by residues Gln101 and 282–285 (HMSD). His306 serves as the catalytic Tele-AMP-histidine intermediate.

This sequence belongs to the RNA 3'-terminal cyclase family. Type 1 subfamily.

It localises to the cytoplasm. The catalysed reaction is a 3'-end 3'-phospho-ribonucleotide-RNA + ATP = a 3'-end 2',3'-cyclophospho-ribonucleotide-RNA + AMP + diphosphate. In terms of biological role, catalyzes the conversion of 3'-phosphate to a 2',3'-cyclic phosphodiester at the end of RNA. The mechanism of action of the enzyme occurs in 3 steps: (A) adenylation of the enzyme by ATP; (B) transfer of adenylate to an RNA-N3'P to produce RNA-N3'PP5'A; (C) and attack of the adjacent 2'-hydroxyl on the 3'-phosphorus in the diester linkage to produce the cyclic end product. The biological role of this enzyme is unknown but it is likely to function in some aspects of cellular RNA processing. The polypeptide is RNA 3'-terminal phosphate cyclase (Saccharolobus islandicus (strain M.16.27) (Sulfolobus islandicus)).